The sequence spans 246 residues: Large ribosomal subunit protein uL30 (246 aa).

N-acetylmethionine is present on M1. Tandem repeats lie at residues 7-17 (KKVPSVPESLL), 18-28 (KRRQAYAAAKA), 29-40 (KRLKRLLAQKKF), and 41-52 (RKAQRKIIYERA). The segment at 7–52 (KKVPSVPESLLKRRQAYAAAKAKRLKRLLAQKKFRKAQRKIIYERA) is 4 X 12 AA tandem repeats.

It belongs to the universal ribosomal protein uL30 family. In terms of assembly, component of the large ribosomal subunit.

The protein resides in the cytoplasm. Functionally, component of the large ribosomal subunit. The ribosome is a large ribonucleoprotein complex responsible for the synthesis of proteins in the cell. Binds to G-rich structures in 28S rRNA and in mRNAs. Plays a regulatory role in the translation apparatus; inhibits cell-free translation of mRNAs. The sequence is that of Large ribosomal subunit protein uL30 (RPL7) from Gallus gallus (Chicken).